The sequence spans 465 residues: MDFLPLFHSLQGRLALVVGGGEVALRKARLLADAGARLRVVAPQIHIELRHLVEQGGGELLERDYQDGDQPGCVLIIAATDDEPLNAEVSRAANARGIPVNVVDAPALCSVIFPAIVDRSPLVVAVSSGGDAPVLARLIRAKLETWIPSTYGQLAGLASRFRHRVKELLPDLQQRRVFWENLFQGEIAERVLAGRPAEAERLLEEHLAGGLAHIATGEVYLVGAGPGDPDLLTFRALRLMQQADVVLYDRLVAPSILELCRRDAERLYVGKRRAEHAVPQDRINRLLVELASQGKRVLRLKGGDPFIFGRGGEEIDELAAHGIPFQVVPGITAASGCAAYAGIPLTHRDHAQSVRFVTGHLKDGTTDLPWQDLVAPGQTLVFYMGLVGLPVICEQLVAHGRSAQTPAALIQQGTTAQQRVFTGTLENLPQLVAEHEVHAPTLVIVGEVVQLRDKLAWFEGAREDA.

The segment at 1–203 (MDFLPLFHSL…GRPAEAERLL (203 aa)) is precorrin-2 dehydrogenase /sirohydrochlorin ferrochelatase. Residues 22-23 (EV) and 43-44 (PQ) each bind NAD(+). S128 is modified (phosphoserine). The segment at 217 to 465 (GEVYLVGAGP…AWFEGAREDA (249 aa)) is uroporphyrinogen-III C-methyltransferase. P226 serves as a coordination point for S-adenosyl-L-methionine. D249 (proton acceptor) is an active-site residue. K271 acts as the Proton donor in catalysis. S-adenosyl-L-methionine contacts are provided by residues 302–304 (GGD), I307, 332–333 (TA), M384, and G413.

This sequence in the N-terminal section; belongs to the precorrin-2 dehydrogenase / sirohydrochlorin ferrochelatase family. In the C-terminal section; belongs to the precorrin methyltransferase family.

The catalysed reaction is uroporphyrinogen III + 2 S-adenosyl-L-methionine = precorrin-2 + 2 S-adenosyl-L-homocysteine + H(+). It carries out the reaction precorrin-2 + NAD(+) = sirohydrochlorin + NADH + 2 H(+). It catalyses the reaction siroheme + 2 H(+) = sirohydrochlorin + Fe(2+). Its pathway is cofactor biosynthesis; adenosylcobalamin biosynthesis; precorrin-2 from uroporphyrinogen III: step 1/1. It functions in the pathway cofactor biosynthesis; adenosylcobalamin biosynthesis; sirohydrochlorin from precorrin-2: step 1/1. The protein operates within porphyrin-containing compound metabolism; siroheme biosynthesis; precorrin-2 from uroporphyrinogen III: step 1/1. It participates in porphyrin-containing compound metabolism; siroheme biosynthesis; siroheme from sirohydrochlorin: step 1/1. Its pathway is porphyrin-containing compound metabolism; siroheme biosynthesis; sirohydrochlorin from precorrin-2: step 1/1. Multifunctional enzyme that catalyzes the SAM-dependent methylations of uroporphyrinogen III at position C-2 and C-7 to form precorrin-2 via precorrin-1. Then it catalyzes the NAD-dependent ring dehydrogenation of precorrin-2 to yield sirohydrochlorin. Finally, it catalyzes the ferrochelation of sirohydrochlorin to yield siroheme. The polypeptide is Siroheme synthase (Pseudomonas aeruginosa (strain LESB58)).